The chain runs to 313 residues: Ankyrin repeat family A protein 2 (313 aa).

5 ANK repeats span residues Ala-148 to Glu-180, Glu-181 to Lys-213, Gly-214 to Trp-246, Asn-247 to Asp-279, and Ser-280 to Glu-313.

As to quaternary structure, interacts (via ANK repeats) with CCDC8 (via PxLPxI/L motif); mediates the interaction with the 3M complex which is composed of CCDC8, CUL7 and OBSL1. Interacts (via ANK repeats) with HDAC4 (via PxLPxI/L motif). Interacts (via ANK repeats) with HDAC5 (via PxLPxI/L motif). Interacts (via ANK repeats) with LRP2/megalin (via PxLPxI/L motif). Interacts (via ANK repeats) with RFX7 (via PxLPxI/L motif). Interacts with AHRR. Interacts with NEK6.

The protein resides in the cytoplasm. It localises to the cytoskeleton. It is found in the membrane. May regulate the interaction between the 3M complex and the histone deacetylases HDAC4 and HDAC5. May also regulate LRP2/megalin. The polypeptide is Ankyrin repeat family A protein 2 (ANKRA2) (Homo sapiens (Human)).